A 231-amino-acid chain; its full sequence is Superoxide dismutase [Mn], mitochondrial (231 aa).

Residues 1-27 (MALRTLASRKTLAAAALPLAAAAAARG) constitute a mitochondrion transit peptide. Mn(2+)-binding residues include H55, H103, D192, and H196.

It belongs to the iron/manganese superoxide dismutase family. Homotetramer. Mn(2+) serves as cofactor.

It localises to the mitochondrion matrix. The enzyme catalyses 2 superoxide + 2 H(+) = H2O2 + O2. Destroys superoxide anion radicals which are normally produced within the cells and which are toxic to biological systems. This is Superoxide dismutase [Mn], mitochondrial (SODA) from Oryza sativa subsp. japonica (Rice).